The following is a 414-amino-acid chain: Esterase FrsA (414 aa).

It belongs to the FrsA family.

The catalysed reaction is a carboxylic ester + H2O = an alcohol + a carboxylate + H(+). Catalyzes the hydrolysis of esters. The protein is Esterase FrsA of Salmonella dublin (strain CT_02021853).